We begin with the raw amino-acid sequence, 42 residues long: F420-non-reducing hydrogenase vhu subunit U (42 aa).

Selenocysteine 21 and cysteine 24 together coordinate Ni(2+). Position 21 (selenocysteine 21) is a non-standard amino acid, selenocysteine. Residues 28–42 constitute a propeptide, removed in mature form; the sequence is VLDRVKFRIERKDED.

It belongs to the [NiFe]/[NiFeSe] hydrogenase large subunit family. As to quaternary structure, the F420-non-reducing hydrogenase vhu is composed of four subunits; VhuA, VhuD, VhuG and VhuU. Ni(2+) is required as a cofactor.

The protein is F420-non-reducing hydrogenase vhu subunit U (vhuU) of Methanopyrus kandleri (strain AV19 / DSM 6324 / JCM 9639 / NBRC 100938).